The chain runs to 456 residues: Chaperone protein dnaJ GFA2, mitochondrial (456 aa).

The N-terminal 89 residues, 1–89 (MVPSNGAKVL…RSFHGTGSSF (89 aa)), are a transit peptide targeting the mitochondrion. Positions 94–159 (DYYSVLGVSK…EKRDLYDQVG (66 aa)) constitute a J domain. The CR-type zinc finger occupies 225-303 (GCSKTVTFQT…CRGARVVRGQ (79 aa)). Residues C238, C241, C255, C258, C277, C280, C291, and C294 each contribute to the Zn(2+) site. CXXCXGXG motif repeat units lie at residues 238–245 (CNTCGGQG), 255–262 (CKACNGSG), 277–284 (CQKCGGAG), and 291–298 (CKSCRGAR).

It belongs to the DnaJ family. As to expression, widely expressed.

The protein resides in the mitochondrion. Chaperone that may play a role in mitochondrial protein folding. Involved in female gametophyte development. Required for cell death of the synergid cells during fertilization process, and fusion of the polar nuclei during megagametogenesis. The polypeptide is Chaperone protein dnaJ GFA2, mitochondrial (Arabidopsis thaliana (Mouse-ear cress)).